A 763-amino-acid chain; its full sequence is Xaa-Pro dipeptidyl-peptidase (763 aa).

Residues S348, D468, and H498 each act as charge relay system in the active site.

This sequence belongs to the peptidase S15 family. Homodimer.

It is found in the cytoplasm. It catalyses the reaction Hydrolyzes Xaa-Pro-|- bonds to release unblocked, N-terminal dipeptides from substrates including Ala-Pro-|-p-nitroanilide and (sequentially) Tyr-Pro-|-Phe-Pro-|-Gly-Pro-|-Ile.. Its function is as follows. Removes N-terminal dipeptides sequentially from polypeptides having unsubstituted N-termini provided that the penultimate residue is proline. The sequence is that of Xaa-Pro dipeptidyl-peptidase (pepX) from Lactococcus lactis subsp. cremoris (Streptococcus cremoris).